The primary structure comprises 190 residues: CDP-diacylglycerol--glycerol-3-phosphate 3-phosphatidyltransferase (190 aa).

Residues 6-17 are Cytoplasmic-facing; that stretch reads GVFNIPMYLTLF. A helical transmembrane segment spans residues 18 to 42; it reads RIIMVPCFVAVFYWPIYWSPMLCTL. Over 43-65 the chain is Periplasmic; that stretch reads IFFIAAITDWFDGFLARRWNQTS. Residues 66–86 form a helical membrane-spanning segment; sequence RIGGFLDPIADKIMIITALIL. Residues 87–91 are Cytoplasmic-facing; sequence ISEHF. The helical transmembrane segment at 92–112 threads the bilayer; that stretch reads HVWWMTLPISSIIIREILISS. At 113–150 the chain is on the periplasmic side; sequence LRECIARVDNKNNISVIWLSKVKTFAQMLALIALLCRL. Residues 151–173 form a helical membrane-spanning segment; sequence NEWTVIMGVISLYTAMLLTLWSM. At 174–186 the chain is on the cytoplasmic side; the sequence is CYYVYSVSSILLQ.

Belongs to the CDP-alcohol phosphatidyltransferase class-I family.

It localises to the cell inner membrane. It catalyses the reaction a CDP-1,2-diacyl-sn-glycerol + sn-glycerol 3-phosphate = a 1,2-diacyl-sn-glycero-3-phospho-(1'-sn-glycero-3'-phosphate) + CMP + H(+). The protein operates within phospholipid metabolism; phosphatidylglycerol biosynthesis; phosphatidylglycerol from CDP-diacylglycerol: step 1/2. Its function is as follows. Catalyzes the conversion of cytidine diphosphate diacylglycerol (CDP-DG) and glycerol 3-phosphate into phosphatidylglycerol. Essential for the synthesis of anionic phospholipids, thereby playing a role in balancing the ratio of zwitterionic and anionic phospholipids, which is thought to be important for normal membrane function. This chain is CDP-diacylglycerol--glycerol-3-phosphate 3-phosphatidyltransferase, found in Blochmanniella floridana.